The sequence spans 432 residues: SVP1-like protein 2 (432 aa).

2 WD repeats span residues 223–263 and 268–307; these read AHKS…LLYE and LDRAIVTSMKFSHDDSKLAVLSDKNTLHVYNVSPLNTSSG.

Belongs to the WD repeat PROPPIN family.

The protein resides in the vacuole membrane. It is found in the cytoplasmic vesicle membrane. Its function is as follows. Involved in mitochondrial or peroxisomal functions and amino acid signaling pathways. The sequence is that of SVP1-like protein 2 (HSV2) from Debaryomyces hansenii (strain ATCC 36239 / CBS 767 / BCRC 21394 / JCM 1990 / NBRC 0083 / IGC 2968) (Yeast).